Here is a 62-residue protein sequence, read N- to C-terminus: Short neurotoxin C (62 aa).

Residues 1 to 16 (RRCFNQQSSQPQTNKS) show a composition bias toward polar residues. The disordered stretch occupies residues 1–21 (RRCFNQQSSQPQTNKSCPPGE). Intrachain disulfides connect Cys3–Cys24, Cys17–Cys41, Cys43–Cys54, and Cys55–Cys60.

This sequence belongs to the three-finger toxin family. Short-chain subfamily. Type I alpha-neurotoxin sub-subfamily. As to expression, expressed by the venom gland.

The protein resides in the secreted. Its function is as follows. Binds to muscle nicotinic acetylcholine receptor (nAChR) and inhibit acetylcholine from binding to the receptor, thereby impairing neuromuscular transmission. The chain is Short neurotoxin C from Laticauda crockeri (Crocker's sea snake).